We begin with the raw amino-acid sequence, 63 residues long: Protein Wfdc21 (63 aa).

An N-terminal signal peptide occupies residues Met-1 to Ala-24. In terms of domain architecture, WAP; atypical spans Ala-25–Asn-63. Cystine bridges form between Cys-35–Cys-56, Cys-39–Cys-51, and Cys-45–Cys-60.

As to expression, predominantly expressed in white adipose tissue and liver.

It localises to the secreted. In terms of biological role, may promote activation of the metalloproteinase MMP2. This chain is Protein Wfdc21, found in Mus musculus (Mouse).